The primary structure comprises 765 residues: Probable dehydratase PflD (765 aa).

The PFL domain occupies 3–637; that stretch reads NRISRLKTAL…VVGATPDGRF (635 aa). In terms of domain architecture, Glycine radical spans 645 to 765; that stretch reads GGLSPMLGQD…DIIRRTAHQL (121 aa). Gly-741 carries the glycine radical modification.

Belongs to the glycyl radical enzyme (GRE) family.

In terms of biological role, probably shows dehydratase activity. This chain is Probable dehydratase PflD (pflD), found in Escherichia coli (strain K12).